Consider the following 131-residue polypeptide: UPF0102 protein YraN (131 aa).

The interval 1 to 20 is disordered; it reads MATVPTRSGSPRQLTTKQTG.

This sequence belongs to the UPF0102 family.

The protein is UPF0102 protein YraN of Escherichia coli O139:H28 (strain E24377A / ETEC).